Reading from the N-terminus, the 102-residue chain is Small ribosomal subunit protein bS6 (102 aa).

Belongs to the bacterial ribosomal protein bS6 family.

Functionally, binds together with bS18 to 16S ribosomal RNA. This chain is Small ribosomal subunit protein bS6, found in Deinococcus deserti (strain DSM 17065 / CIP 109153 / LMG 22923 / VCD115).